The primary structure comprises 232 residues: Large ribosomal subunit protein uL1 (232 aa).

Belongs to the universal ribosomal protein uL1 family. As to quaternary structure, part of the 50S ribosomal subunit.

Binds directly to 23S rRNA. The L1 stalk is quite mobile in the ribosome, and is involved in E site tRNA release. Functionally, protein L1 is also a translational repressor protein, it controls the translation of the L11 operon by binding to its mRNA. This is Large ribosomal subunit protein uL1 from Methylorubrum populi (strain ATCC BAA-705 / NCIMB 13946 / BJ001) (Methylobacterium populi).